The chain runs to 135 residues: Galectin-1 (135 aa).

Ala2 carries the N-acetylalanine modification. The 132-residue stretch at 4–135 (GLVASNLNLK…DFKIKCVAFE (132 aa)) folds into the Galectin domain. N6-acetyllysine occurs at positions 13 and 29. Ser30 is modified (phosphoserine). Residues 45 to 49 (HFNPR), His53, Asn62, and 69 to 72 (WGAE) contribute to the a beta-D-galactoside site. At Lys108 the chain carries N6-acetyllysine; alternate. An N6-succinyllysine; alternate modification is found at Lys108. At Lys128 the chain carries N6-acetyllysine.

Homodimer. Binds LGALS3BP. Interacts with CD2, CD3, CD4, CD6, CD7, CD43, ALCAM and CD45. Interacts with laminin (via poly-N-acetyllactosamine). Interacts with SUSD2. Interacts with cargo receptor TMED10; the interaction mediates the translocation from the cytoplasm into the ERGIC (endoplasmic reticulum-Golgi intermediate compartment) and thereby secretion.

The protein resides in the secreted. The protein localises to the extracellular space. Its subcellular location is the extracellular matrix. It is found in the cytoplasm. Functionally, lectin that binds beta-galactoside and a wide array of complex carbohydrates. Plays a role in regulating apoptosis, cell proliferation and cell differentiation. Inhibits CD45 protein phosphatase activity and therefore the dephosphorylation of Lyn kinase. Strong inducer of T-cell apoptosis. This chain is Galectin-1 (LGALS1), found in Ovis aries (Sheep).